The following is a 148-amino-acid chain: Large ribosomal subunit protein uL15 (148 aa).

Residues 1–30 (MTHSKRNTRKLRGHVSHGHGRVGKHRKHPG) are compositionally biased toward basic residues. Residues 1–38 (MTHSKRNTRKLRGHVSHGHGRVGKHRKHPGGRGMAGPE) form a disordered region.

Belongs to the universal ribosomal protein uL15 family.

The sequence is that of Large ribosomal subunit protein uL15 (RPL27A) from Euplotes crassus.